Consider the following 367-residue polypeptide: Di-N-acetylchitobiase (367 aa).

A signal peptide spans 1 to 23 (MALSDLLELTLLLLLPLLERLSA). A GH18 domain is found at 24 to 367 (EDCPCSEASL…EMWGALRPRL (344 aa)). Glu128 serves as the catalytic Proton donor. N-linked (GlcNAc...) asparagine glycans are attached at residues Asn178, Asn213, Asn247, and Asn284.

This sequence belongs to the glycosyl hydrolase 18 family.

Its subcellular location is the lysosome. Functionally, involved in the degradation of asparagine-linked glycoproteins. Hydrolyze of N-acetyl-beta-D-glucosamine (1-4)N-acetylglucosamine chitobiose core from the reducing end of the bond, it requires prior cleavage by glycosylasparaginase. The protein is Di-N-acetylchitobiase (Ctbs) of Rattus norvegicus (Rat).